The sequence spans 88 residues: UPF0335 protein WD_0557 (88 aa).

The protein belongs to the UPF0335 family.

The sequence is that of UPF0335 protein WD_0557 from Wolbachia pipientis wMel.